The primary structure comprises 552 residues: Rqc2 homolog RqcH (552 aa).

Coiled-coil stretches lie at residues 271–317 (RDRV…QKGE) and 357–398 (NAQR…MLGQ).

This sequence belongs to the NEMF family. Associates with stalled 50S ribosomal subunits, binds to RqcH. Recombinant protein interacts with the N-terminal 30 kDa of human fibronectin (FN1).

Functionally, key component of the ribosome quality control system (RQC), a ribosome-associated complex that mediates the extraction of incompletely synthesized nascent chains from stalled ribosomes and their subsequent degradation. RqcH recruits Ala-charged tRNA, and with RqcP directs the elongation of stalled nascent chains on 50S ribosomal subunits, leading to non-templated C-terminal alanine extensions (Ala tail). The Ala tail promotes nascent chain degradation. May add between 1 and at least 8 Ala residues. Binds to stalled 50S ribosomal subunits. The chain is Rqc2 homolog RqcH from Streptococcus suis (strain 05ZYH33).